The sequence spans 628 residues: Probable potassium transport system protein Kup (628 aa).

The next 12 membrane-spanning stretches (helical) occupy residues 15-35 (FAAE…SPLY), 49-69 (FLGG…ILSV), 106-126 (WYLL…GVLT), 141-161 (ISPE…LAVF), 174-194 (FFGP…VYGI), 210-230 (IMLM…CFLA), 254-274 (LFVA…ILLV), 295-315 (LLFL…TGVF), 343-363 (IYVG…VLGF), 369-389 (LASA…ILFI), 398-418 (WPAP…FAFA), and 425-445 (IHDG…VMVS).

The protein belongs to the HAK/KUP transporter (TC 2.A.72) family.

It localises to the cell inner membrane. It carries out the reaction K(+)(in) + H(+)(in) = K(+)(out) + H(+)(out). In terms of biological role, transport of potassium into the cell. Likely operates as a K(+):H(+) symporter. This is Probable potassium transport system protein Kup from Xanthobacter autotrophicus (strain ATCC BAA-1158 / Py2).